The chain runs to 320 residues: MKVNQDTHNAQPKLIDSNESVGDRLNILVVSGRSGSGKTSVLNILEDLGFYSIDNLPLSLVPEAVQKLVCDSGIKRIALGVDIRTPRADLSNFAAIHDSLKQAYGEEAVTVMYVTAQEETLVARFNATRRIHPLMVLDTKGVENTAYNLPAAIEKEIQLLQPICKYADIKIDTSMLNIHQLKERLRDYVGVDNQIVINLLSFGFKYGSPIDADFVFDVRILPNPHWNPTLRAATGLDAEVGEFFADYPEVTEMTGDIATFLNRWLPDFLHNNRHTVTVAIGCTGGKHRSVFITKHLQDSLQNSLPEGLTVTAKHREKHRW.

Residue Gly32–Thr39 coordinates ATP. A GTP-binding site is contributed by Asp82–Thr85.

It belongs to the RapZ-like family.

Displays ATPase and GTPase activities. The chain is Nucleotide-binding protein Psyc_0118 from Psychrobacter arcticus (strain DSM 17307 / VKM B-2377 / 273-4).